The chain runs to 313 residues: MGNELQHRTVLLDEAVESLVTRPDGIYVDGTFGRGGHSRAVLARLAEGGRLIAFDKDPRAIETAQRIEDARFSIVHDSFASMRDALAARGIEKVSGVLLDLGVSSPQVDDPARGFSFRADGPLDMRMDPTRGESAAEWLARASVQELTEVIRDYGEERFAFQIAKALVARRAESDRLGPLDTTGELAQIVGHVVKTREKGKDPATRTFQAIRIHVNQELADLQVVLDAALSLLEQGGRLVVISFHSLEDRIVKRFMQAHASAPAVDRRLPIRAVDLPSPPLKIISRQFPSEAEVVANPRARSAVMRIAERVTP.

S-adenosyl-L-methionine contacts are provided by residues 35-37 (GGH), aspartate 55, phenylalanine 79, aspartate 100, and glutamine 107.

Belongs to the methyltransferase superfamily. RsmH family.

The protein resides in the cytoplasm. The catalysed reaction is cytidine(1402) in 16S rRNA + S-adenosyl-L-methionine = N(4)-methylcytidine(1402) in 16S rRNA + S-adenosyl-L-homocysteine + H(+). Specifically methylates the N4 position of cytidine in position 1402 (C1402) of 16S rRNA. The protein is Ribosomal RNA small subunit methyltransferase H of Burkholderia ambifaria (strain ATCC BAA-244 / DSM 16087 / CCUG 44356 / LMG 19182 / AMMD) (Burkholderia cepacia (strain AMMD)).